Here is a 461-residue protein sequence, read N- to C-terminus: RCC1-like G exchanging factor-like protein (461 aa).

The span at 1-10 shows a compositional bias: low complexity; sequence MLAAARALRG. The N-terminal 34 residues, 1-34, are a transit peptide targeting the mitochondrion; sequence MLAAARALRGPRPRWPTPAREHWTPAGRSRSRRE. A disordered region spans residues 1 to 35; that stretch reads MLAAARALRGPRPRWPTPAREHWTPAGRSRSRREA. RCC1 repeat units follow at residues 55 to 121, 125 to 188, 190 to 244, 245 to 297, 298 to 350, 352 to 408, and 409 to 458; these read ADRV…LSSK, VTKV…VLTD, EGVF…FLTD, KGEV…ALSA, DGGV…VLNA, GHVF…ALTN, and KGEL…TLAK.

In terms of assembly, forms a regulatory protein-RNA complex, consisting of RCC1L, NGRN, RPUSD3, RPUSD4, TRUB2, FASTKD2 and 16S mt-rRNA. Interacts with 16S mt-rRNA; this interaction is direct. Interacts with OPA1; this interaction is direct. In terms of tissue distribution, at E8.5, broadly expressed in yolk sac placenta, decidua, and embryo, with highest levels found in the trophoblast giant cells (TGCs) and ectoplacental cone (at protein level).

It is found in the mitochondrion inner membrane. Its function is as follows. Guanine nucleotide exchange factor (GEF) for mitochondrial dynamin-related GTPase OPA1. Activates OPA1, by exchanging bound GDP for free GTP, and drives OPA1 and MFN1-dependent mitochondrial fusion. Plays an essential role in mitochondrial ribosome biogenesis. As a component of a functional protein-RNA module, consisting of RCC1L, NGRN, RPUSD3, RPUSD4, TRUB2, FASTKD2 and 16S mitochondrial ribosomal RNA (16S mt-rRNA), controls 16S mt-rRNA abundance and is required for intra-mitochondrial translation of core subunits of the oxidative phosphorylation system. This chain is RCC1-like G exchanging factor-like protein, found in Mus musculus (Mouse).